The chain runs to 518 residues: Lysine--tRNA ligase (518 aa).

The disordered stretch occupies residues 1 to 28 (MTEPTQPNAAQPDAARPNVAPEMDDNKI). 2 residues coordinate Mg(2+): glutamate 428 and glutamate 435.

Belongs to the class-II aminoacyl-tRNA synthetase family. As to quaternary structure, homodimer. Mg(2+) is required as a cofactor.

The protein localises to the cytoplasm. The catalysed reaction is tRNA(Lys) + L-lysine + ATP = L-lysyl-tRNA(Lys) + AMP + diphosphate. This chain is Lysine--tRNA ligase, found in Paraburkholderia phytofirmans (strain DSM 17436 / LMG 22146 / PsJN) (Burkholderia phytofirmans).